The chain runs to 440 residues: MEWQQLLSRKRLGKQQLEEHQFERTSFLKDYDRIVYSTAFRRLKDKTQVFPLSKNADVRTRLIHSLEVSCVGRSLGRMVGDQIIKRHQLQAIEAADFGDILSAACLAHDIGNPPFGHAGEDAIQTAFQKWYARKNRSGALINPLEKADFDRFEGNAQGFRILTRLGLPHRPGGLQLTCATLATFAKYPRESFIPQRTLARHPGKSLQKYGFFQAEKDLFTEVAETVGLIGRSPKVAWWCRHPLTFLMEAADDLCYSIVDLEDGFHMGYLPFAAVQDKLQSIADIDLNQYEGSPAETIKRLRAKAINRLVKEVAQLFLDHEPDILAGKFDQSLVELSRFSPQLKEIETMTTNAVFHHPNVVRIKIAGFEVLGDLLTDFLTSVLEKQPRPKGKLLKFMLPPEHQIAPDEDNYSKILKVTDYIAGMTDLQATLLYQQLRGISL.

The 196-residue stretch at 61-256 (RLIHSLEVSC…MEAADDLCYS (196 aa)) folds into the HD domain.

The protein belongs to the dGTPase family. Type 3 subfamily.

In Synechocystis sp. (strain ATCC 27184 / PCC 6803 / Kazusa), this protein is Deoxyguanosinetriphosphate triphosphohydrolase-like protein.